A 235-amino-acid chain; its full sequence is Protein shisa-5 (235 aa).

Positions 1 to 26 (MAAPAPSLWTLLLLLLLLPPPPGAHG) are cleaved as a signal peptide. Topologically, residues 27 to 105 (ELCRPFGEDN…SSFDSDPMSG (79 aa)) are extracellular. The chain crosses the membrane as a helical span at residues 106 to 126 (FGATVAIGVTIFVVFIATIII). The Cytoplasmic portion of the chain corresponds to 127 to 235 (CFTCSCCCLY…TYMDSLKTIP (109 aa)). The segment at 157 to 235 (APYPQPQPQP…TYMDSLKTIP (79 aa)) is disordered. Composition is skewed to pro residues over residues 159–172 (YPQP…PSYP) and 181–211 (PMPP…PPPY).

The protein belongs to the shisa family. As to quaternary structure, interacts with PDCD6; PDCD6 can stabilize SHISA5. Spleen and thymus.

The protein localises to the endoplasmic reticulum membrane. Its subcellular location is the nucleus membrane. In terms of biological role, can induce apoptosis in a caspase-dependent manner and plays a role in p53/TP53-dependent apoptosis. This chain is Protein shisa-5 (Shisa5), found in Mus musculus (Mouse).